We begin with the raw amino-acid sequence, 403 residues long: Tripartite motif-containing protein 59 (403 aa).

The segment at 10–60 (CPICYSIFEDPRVLPCSHTFCRNCLENVLQASGNFYIWRPLRIPLKCPNCR) adopts an RING-type zinc-finger fold. The B box-type zinc-finger motif lies at 92-134 (PDVVTCPEHYRQPLNVYCLLDKKLVCGHCLTIGQHHGHPIDDL). The Zn(2+) site is built by C97, H100, C120, and H126. The stretch at 163 to 246 (LIEKLEEQKC…TITTSLQDES (84 aa)) forms a coiled coil. The helical transmembrane segment at 329–349 (ILNIAIVSLISVILMLILLFN) threads the bilayer.

Belongs to the TRIM/RBCC family. In terms of assembly, interacts with ECSIT. Moderately expressed in the spleen, brain and heart and very highly expressed in the testis.

Its subcellular location is the endoplasmic reticulum membrane. The enzyme catalyses S-ubiquitinyl-[E2 ubiquitin-conjugating enzyme]-L-cysteine + [acceptor protein]-L-lysine = [E2 ubiquitin-conjugating enzyme]-L-cysteine + N(6)-ubiquitinyl-[acceptor protein]-L-lysine.. Its pathway is protein modification; protein ubiquitination. E3 ubiquitin ligase involved in different processes such as development and immune response. Serves as a negative regulator for innate immune signaling pathways by suppressing RLR-induced activation of IRF3/7 and NF-kappa-B via interaction with adapter ECSIT. Regulates autophagy through modulating both the transcription and the ubiquitination of BECN1. On the one hand, regulates the transcription of BECN1 through negatively modulating the NF-kappa-B pathway. On the other hand, regulates TRAF6-mediated 'Lys-63'-linked ubiquitination of BECN1, thus affecting the formation of the BECN1-PIK3C3 complex. In addition, mediates 'Lys-48'-linked ubiquitination of TRAF6 and thereby promotes TRAF6 proteasomal degradation. Also acts as a critical regulator for early embryo development from blastocyst stage to gastrula through modulating F-actin assembly and WASH1 'Lys-63'-linked ubiquitination. The sequence is that of Tripartite motif-containing protein 59 (Trim59) from Mus musculus (Mouse).